The sequence spans 216 residues: MATDSRTSWLLTVSLLCLLWPQEASAFPAMPLSSLFSNAVLRAQHLHQLAADTYKEFERAYIPEGQRYSIQNAQAAFCFSETIPAPTGKEEAQQRTDMELLRFSLLLIQSWLGPVQFLSRIFTNSLMFGTSDRVYEKLKDLEEGIQALMQELEDGSPRVGQILKQTYDKFDANMRSDDALLKNYGLLSCFKKDLHKAETYLRVMKCRRFVESSCAF.

Residues 1–26 (MATDSRTSWLLTVSLLCLLWPQEASA) form the signal peptide. H45 contributes to the Zn(2+) binding site. A disulfide bridge links C78 with C189. Position 131 is a phosphoserine (S131). E198 contacts Zn(2+). C206 and C214 are joined by a disulfide.

The protein belongs to the somatotropin/prolactin family.

It is found in the secreted. In terms of biological role, plays an important role in growth control. Its major role in stimulating body growth is to stimulate the liver and other tissues to secrete IGF1. It stimulates both the differentiation and proliferation of myoblasts. It also stimulates amino acid uptake and protein synthesis in muscle and other tissues. This chain is Somatotropin (Gh1), found in Mus musculus (Mouse).